Reading from the N-terminus, the 368-residue chain is FAD-dependent monooxygenase phomE (368 aa).

Position 11 (Ala11) interacts with FAD. Catalysis depends on residues Arg140 and Tyr178. The FAD site is built by Asp249 and Gly262.

Belongs to the paxM FAD-dependent monooxygenase family. In terms of assembly, monomer. It depends on FAD as a cofactor.

Its function is as follows. FAD-dependent monooxygenase; part of the gene cluster that mediates the biosynthesis of the phomopsins, a group of hexapeptide mycotoxins which infects lupins and causes lupinosis disease in livestock. The role of phomE within the phomopsins biosynthesis pathway has still to be determined. The pathway starts with the processing of the precursor phomA by several endopeptidases including kexin proteases as well as the cluster-specific S41 family peptidase phomP1 and the oligopeptidase phomG to produce 10 identical copies of the hexapeptide Tyr-Val-Ile-Pro-Ile-Asp. After being excised from the precursor peptide, the core peptides are cyclized and modified post-translationally by enzymes encoded within the gene cluster. The timing and order of proteolysis of the phomA precursor and PTMs are still unknown. Two tyrosinase-like enzymes, phomQ1 and phomQ2, catalyze the chlorination and hydroxylation of Tyr, respectively. PhomYb, is proposed to be involved in the construction of the macrocyclic structure. The other 4 ustYa family proteins may be involved in PTMs that generate the unique structure of phomopsin A. PhomYa is required for the hydroxylation of C-beta of Tyr. PhomYc, phomYd, and phomYe are responsible for the biosynthesis of 2,3-dehydroisoleucine (dIle), 2,3-dehydroaspartic acid (dAsp), and 3,4-dehydroproline (dPro), respectively. While dIle formation by phomYc is indispensable for the installation of dAsp by phomYd, the order of the other PTMs have not been elucidated yet. Most of the biosynthetic enzymes likely have broad substrate specificity, and thus, there might be a metabolic grid from a precursor to phomopsin A. The enzyme(s) responsible for the biosynthesis of 3,4-dehydrovaline (dVal) have also not been identified yet. Finally, phomM acts as an S-adenosylmethionine-dependent alpha-N-methyltransferase that catalyzes two successive N-methylation reactions, converting N-desmethyl-phomopsin A to phomopsin A and phomopsin A further to an N,N-dimethylated congener called phomopsin E. The polypeptide is FAD-dependent monooxygenase phomE (Diaporthe leptostromiformis (Lupinosis disease fungus)).